A 639-amino-acid chain; its full sequence is Chaperone protein DnaK 1 (639 aa).

At Thr-199 the chain carries Phosphothreonine; by autocatalysis. Residues Gln-603–Pro-612 show a composition bias toward low complexity. The segment at Gln-603 to Lys-639 is disordered. Over residues Asn-625 to Lys-639 the composition is skewed to acidic residues.

It belongs to the heat shock protein 70 family.

Its function is as follows. Acts as a chaperone. The protein is Chaperone protein DnaK 1 of Photobacterium profundum (strain SS9).